A 303-amino-acid chain; its full sequence is UDP-3-O-acyl-N-acetylglucosamine deacetylase (303 aa).

Positions 78, 237, and 241 each coordinate Zn(2+). Catalysis depends on histidine 264, which acts as the Proton donor.

This sequence belongs to the LpxC family. Zn(2+) is required as a cofactor.

The enzyme catalyses a UDP-3-O-[(3R)-3-hydroxyacyl]-N-acetyl-alpha-D-glucosamine + H2O = a UDP-3-O-[(3R)-3-hydroxyacyl]-alpha-D-glucosamine + acetate. It functions in the pathway glycolipid biosynthesis; lipid IV(A) biosynthesis; lipid IV(A) from (3R)-3-hydroxytetradecanoyl-[acyl-carrier-protein] and UDP-N-acetyl-alpha-D-glucosamine: step 2/6. Its function is as follows. Catalyzes the hydrolysis of UDP-3-O-myristoyl-N-acetylglucosamine to form UDP-3-O-myristoylglucosamine and acetate, the committed step in lipid A biosynthesis. This Pseudomonas putida (strain ATCC 700007 / DSM 6899 / JCM 31910 / BCRC 17059 / LMG 24140 / F1) protein is UDP-3-O-acyl-N-acetylglucosamine deacetylase.